The primary structure comprises 266 residues: Apolipoprotein A-I (266 aa).

Positions 1–18 are cleaved as a signal peptide; it reads MKAVVLTLAVLFLTGSQA. 2 consecutive repeat copies span residues 67–88 and 89–110. The segment at 67–266 is 10 X approximate tandem repeats; sequence LKLLDNWDSL…DEAAKKLNTQ (200 aa). The residue at position 109 (methionine 109) is a Methionine sulfoxide. A 3; half-length repeat occupies 111 to 121; that stretch reads KDLEEVKQKVQ. 5 tandem repeats follow at residues 122 to 143, 144 to 165, 166 to 187, 188 to 209, and 210 to 231. One copy of the 9; half-length repeat lies at 232 to 242; the sequence is PALEDLRQGLL. Repeat unit 10 spans residues 243-266; sequence PVLESFKVSLLAAVDEAAKKLNTQ.

This sequence belongs to the apolipoprotein A1/A4/E family. Homodimer. Interacts with APOA1BP and CLU. Component of a sperm activating protein complex (SPAP), consisting of APOA1, an immunoglobulin heavy chain, an immunoglobulin light chain and albumin. Interacts with NDRG1. Interacts with SCGB3A2. Interacts with NAXE and YJEFN3. In terms of processing, glycosylated. Palmitoylated. Post-translationally, phosphorylation sites are present in the extracellular medium.

It is found in the secreted. In terms of biological role, participates in the reverse transport of cholesterol from tissues to the liver for excretion by promoting cholesterol efflux from tissues and by acting as a cofactor for the lecithin cholesterol acyltransferase (LCAT). As part of the SPAP complex, activates spermatozoa motility. This Mustela putorius furo (European domestic ferret) protein is Apolipoprotein A-I (APOA1).